Here is a 219-residue protein sequence, read N- to C-terminus: Ribosome maturation factor RimP (219 aa).

The segment at 195-219 is disordered; sequence EGRIPGDDLGAEPEDVASTETQEKK.

This sequence belongs to the RimP family.

It is found in the cytoplasm. Its function is as follows. Required for maturation of 30S ribosomal subunits. This is Ribosome maturation factor RimP from Brucella abortus (strain S19).